The chain runs to 282 residues: DNA-directed RNA polymerase III subunit RPC5 (282 aa).

A disordered region spans residues 1-70 (MSIDNKLFVT…TGEEEEDDPV (70 aa)). 2 stretches are compositionally biased toward acidic residues: residues 10–35 (TEED…DMIA) and 60–70 (DTGEEEEDDPV). Threonine 61 carries the phosphothreonine modification.

As to quaternary structure, component of the RNA polymerase III (Pol III) complex consisting of 17 subunits. Interacts with RPC53/RPC4. RPC53/RPC4, RPC37/RPC5 and RPC11/RPC10 probably form a Pol III subcomplex.

It is found in the nucleus. Its function is as follows. DNA-dependent RNA polymerase catalyzes the transcription of DNA into RNA using the four ribonucleoside triphosphates as substrates. Specific peripheric component of RNA polymerase III which synthesizes small RNAs, such as 5S rRNA and tRNAs. The RPC53/RPC4-RPC37/RPC5 subcomplex is required for terminator recognition and reinitiation. This chain is DNA-directed RNA polymerase III subunit RPC5 (RPC37), found in Saccharomyces cerevisiae (strain ATCC 204508 / S288c) (Baker's yeast).